Consider the following 133-residue polypeptide: METNKLYECTVIIDGGLQDEPIAEAMAMVQKVITEKGGSIKSVLDIGRRKTAYPINKKTIGYYAHIEFTADTPVIAEIERVLRYEDVLLRYLIIHLTTPLLEMRKRVEKYSVVIGSPEDKAAAEAEASEEEKK.

Belongs to the bacterial ribosomal protein bS6 family.

In terms of biological role, binds together with bS18 to 16S ribosomal RNA. The chain is Small ribosomal subunit protein bS6 from Chlorobium phaeovibrioides (strain DSM 265 / 1930) (Prosthecochloris vibrioformis (strain DSM 265)).